The chain runs to 209 residues: MGKGDPNKPRGKMSSYAFFVQTCREEHKKKHPDSSVNFAEFSKKCSERWKTMSAKEKSKFEDMAKSDKARYDREMKNYVPPKGDKKGKKKDPNAPKRPPSAFFLFCSEHRPKIKSEHPGLSIGDTAKKLGEMWSEQSAKDKQPYEQKAAKLKEKYEKDIAAYRAKGKSEAGKKGPGRPTGSKKKNEPEDEEEEEEEEDEDEEEEDEDEE.

Lysine 3 bears the N6-acetyllysine mark. A DNA-binding region (HMG box 1) is located at residues 9 to 79 (PRGKMSSYAF…RYDREMKNYV (71 aa)). Position 23 is a cysteine sulfonic acid (-SO3H); alternate (cysteine 23). Cysteine 23 and cysteine 45 are joined by a disulfide. An N6-acetyllysine modification is found at lysine 30. The residue at position 35 (serine 35) is a Phosphoserine. Lysine 43 is modified (N6-acetyllysine). At cysteine 45 the chain carries Cysteine sulfonic acid (-SO3H); alternate. The segment covering 52 to 76 (MSAKEKSKFEDMAKSDKARYDREMK) has biased composition (basic and acidic residues). 2 disordered regions span residues 52 to 150 (MSAK…KAAK) and 162 to 209 (YRAK…EDEE). At lysine 90 the chain carries N6-acetyllysine. Positions 95 to 163 (PKRPPSAFFL…KYEKDIAAYR (69 aa)) form a DNA-binding region, HMG box 2. Serine 100 carries the phosphoserine modification. Cysteine 106 carries the post-translational modification Cysteine sulfonic acid (-SO3H). Composition is skewed to basic and acidic residues over residues 107–117 (SEHRPKIKSEH), 137–150 (SAKDKQPYEQKAAK), and 162–172 (YRAKGKSEAGK). N6-acetyllysine occurs at positions 114 and 141. The required for chemotactic activity stretch occupies residues 165–180 (KGKSEAGKKGPGRPTG). The segment covering 187–209 (PEDEEEEEEEEDEDEEEEDEDEE) has biased composition (acidic residues).

Belongs to the HMGB family. In terms of assembly, interacts with POU2F2, POU2F1 and POU3F1. Component of the RAG complex composed of core components RAG1 and RAG2, and associated component HMGB1 or HMGB2. Component of the SET complex, composed of at least ANP32A, APEX1, HMGB2, NME1, SET and TREX1. Directly interacts with SET. Interacts with LEF1. Post-translationally, reduction/oxidation of cysteine residues Cys-23, Cys-45 and Cys-106 and a possible intramolecular disulfide bond involving Cys-23 and Cys-45 give rise to different redox forms with specific functional activities in various cellular compartments: 1- fully reduced HMGB2 (HMGB2C23hC45hC106h), 2- disulfide HMGB2 (HMGB2C23-C45C106h) and 3- sulfonyl HMGB2 (HMGB2C23soC45soC106so).

It is found in the nucleus. The protein localises to the chromosome. The protein resides in the cytoplasm. It localises to the secreted. Its function is as follows. Multifunctional protein with various roles in different cellular compartments. May act in a redox sensitive manner. In the nucleus is an abundant chromatin-associated non-histone protein involved in transcription, chromatin remodeling and V(D)J recombination and probably other processes. Binds DNA with a preference to non-canonical DNA structures such as single-stranded DNA. Can bent DNA and enhance DNA flexibility by looping thus providing a mechanism to promote activities on various gene promoters by enhancing transcription factor binding and/or bringing distant regulatory sequences into close proximity. Involved in V(D)J recombination by acting as a cofactor of the RAG complex: acts by stimulating cleavage and RAG protein binding at the 23 bp spacer of conserved recombination signal sequences (RSS). Proposed to be involved in the innate immune response to nucleic acids by acting as a cytoplasmic promiscuous immunogenic DNA/RNA sensor which cooperates with subsequent discriminative sensing by specific pattern recognition receptors. In the extracellular compartment acts as a chemokine. Promotes proliferation and migration of endothelial cells implicating AGER/RAGE. Has antimicrobial activity in gastrointestinal epithelial tissues. Involved in inflammatory response to antigenic stimulus coupled with pro-inflammatory activity. May play a role in germ cell differentiation. Involved in modulation of neurogenesis probably by regulation of neural stem proliferation. Involved in articular cartilage surface maintenance implicating LEF1 and the Wnt/beta-catenin pathway. This is High mobility group protein B2 (HMGB2) from Bos taurus (Bovine).